The following is a 279-amino-acid chain: Acetyl-coenzyme A carboxylase carboxyl transferase subunit beta (279 aa).

A CoA carboxyltransferase N-terminal domain is found at 23-279 (LWWKCEECGA…LVTLFSMLKV (257 aa)). Residues Cys-27, Cys-30, Cys-46, and Cys-49 each coordinate Zn(2+). Residues 27–49 (CEECGAMLHKKQFEDHFFTCAEC) form a C4-type zinc finger.

Belongs to the AccD/PCCB family. Acetyl-CoA carboxylase is a heterohexamer composed of biotin carboxyl carrier protein (AccB), biotin carboxylase (AccC) and two subunits each of ACCase subunit alpha (AccA) and ACCase subunit beta (AccD). Zn(2+) is required as a cofactor.

The protein localises to the cytoplasm. The enzyme catalyses N(6)-carboxybiotinyl-L-lysyl-[protein] + acetyl-CoA = N(6)-biotinyl-L-lysyl-[protein] + malonyl-CoA. The protein operates within lipid metabolism; malonyl-CoA biosynthesis; malonyl-CoA from acetyl-CoA: step 1/1. Component of the acetyl coenzyme A carboxylase (ACC) complex. Biotin carboxylase (BC) catalyzes the carboxylation of biotin on its carrier protein (BCCP) and then the CO(2) group is transferred by the transcarboxylase to acetyl-CoA to form malonyl-CoA. The chain is Acetyl-coenzyme A carboxylase carboxyl transferase subunit beta from Pelodictyon phaeoclathratiforme (strain DSM 5477 / BU-1).